The chain runs to 256 residues: Small ribosomal subunit protein uS2 (256 aa).

This sequence belongs to the universal ribosomal protein uS2 family.

In Geotalea uraniireducens (strain Rf4) (Geobacter uraniireducens), this protein is Small ribosomal subunit protein uS2.